A 223-amino-acid polypeptide reads, in one-letter code: Ribose-5-phosphate isomerase A (223 aa).

Substrate-binding positions include 28–31 (TGST), 81–84 (DGAD), and 94–97 (KGGG). The active-site Proton acceptor is the Glu-103. Residue Lys-121 coordinates substrate.

It belongs to the ribose 5-phosphate isomerase family. In terms of assembly, homodimer.

It carries out the reaction aldehydo-D-ribose 5-phosphate = D-ribulose 5-phosphate. It functions in the pathway carbohydrate degradation; pentose phosphate pathway; D-ribose 5-phosphate from D-ribulose 5-phosphate (non-oxidative stage): step 1/1. Its function is as follows. Catalyzes the reversible conversion of ribose-5-phosphate to ribulose 5-phosphate. The polypeptide is Ribose-5-phosphate isomerase A (Janthinobacterium sp. (strain Marseille) (Minibacterium massiliensis)).